The primary structure comprises 194 residues: Flavin prenyltransferase UbiX (194 aa).

FMN is bound by residues 9-11, Ser-35, 86-89, and Arg-121; these read GAS and SIKT. Tyr-151 and Lys-167 together coordinate dimethylallyl phosphate.

The protein belongs to the UbiX/PAD1 family.

The enzyme catalyses dimethylallyl phosphate + FMNH2 = prenylated FMNH2 + phosphate. Its function is as follows. Involved in the carboxylation of phenylphosphate. Flavin prenyltransferase that catalyzes the synthesis of the prenylated FMN cofactor (prenyl-FMN) for 4-hydroxy-3-polyprenylbenzoic acid decarboxylase UbiD. The prenyltransferase is metal-independent and links a dimethylallyl moiety from dimethylallyl monophosphate (DMAP) to the flavin N5 and C6 atoms of FMN. This Thauera aromatica protein is Flavin prenyltransferase UbiX.